Consider the following 365-residue polypeptide: Carbamoyl phosphate synthase small chain (365 aa).

CPSase stretches follow at residues 1–166 and 1–169; these read MKRQ…PSPG and MKRQ…GRGH. 3 residues coordinate L-glutamine: Ser-45, Gly-218, and Gly-220. The Glutamine amidotransferase type-1 domain occupies 170–357; it reads RVVLVDFGMK…LTMIENFKKE (188 aa). Catalysis depends on Cys-245, which acts as the Nucleophile. Positions 246, 249, 287, 289, and 290 each coordinate L-glutamine. Residues His-330 and Glu-332 contribute to the active site.

The protein belongs to the CarA family. As to quaternary structure, composed of two chains; the small (or glutamine) chain promotes the hydrolysis of glutamine to ammonia, which is used by the large (or ammonia) chain to synthesize carbamoyl phosphate. Tetramer of heterodimers (alpha,beta)4.

The enzyme catalyses hydrogencarbonate + L-glutamine + 2 ATP + H2O = carbamoyl phosphate + L-glutamate + 2 ADP + phosphate + 2 H(+). It catalyses the reaction L-glutamine + H2O = L-glutamate + NH4(+). The protein operates within amino-acid biosynthesis; L-arginine biosynthesis; carbamoyl phosphate from bicarbonate: step 1/1. Its pathway is pyrimidine metabolism; UMP biosynthesis via de novo pathway; (S)-dihydroorotate from bicarbonate: step 1/3. Functionally, small subunit of the glutamine-dependent carbamoyl phosphate synthetase (CPSase). CPSase catalyzes the formation of carbamoyl phosphate from the ammonia moiety of glutamine, carbonate, and phosphate donated by ATP, constituting the first step of 2 biosynthetic pathways, one leading to arginine and/or urea and the other to pyrimidine nucleotides. The small subunit (glutamine amidotransferase) binds and cleaves glutamine to supply the large subunit with the substrate ammonia. This is Carbamoyl phosphate synthase small chain from Bacillus cereus (strain ZK / E33L).